A 383-amino-acid chain; its full sequence is Chorismate synthase (383 aa).

Arg-48 provides a ligand contact to NADP(+). FMN contacts are provided by residues 125–127, Gly-286, 301–305, and Arg-328; these read RSS and HAPTS. Positions 361 to 383 are disordered; that stretch reads PDRLDDNPGQYETEYHPSSPQTN.

This sequence belongs to the chorismate synthase family. FMNH2 serves as cofactor.

It carries out the reaction 5-O-(1-carboxyvinyl)-3-phosphoshikimate = chorismate + phosphate. The protein operates within metabolic intermediate biosynthesis; chorismate biosynthesis; chorismate from D-erythrose 4-phosphate and phosphoenolpyruvate: step 7/7. Its function is as follows. Catalyzes the anti-1,4-elimination of the C-3 phosphate and the C-6 proR hydrogen from 5-enolpyruvylshikimate-3-phosphate (EPSP) to yield chorismate, which is the branch point compound that serves as the starting substrate for the three terminal pathways of aromatic amino acid biosynthesis. This reaction introduces a second double bond into the aromatic ring system. This chain is Chorismate synthase, found in Haloquadratum walsbyi (strain DSM 16790 / HBSQ001).